The primary structure comprises 202 residues: Na(+)-translocating NADH-quinone reductase subunit E (202 aa).

6 helical membrane-spanning segments follow: residues 11-31 (SIFM…FLAV), 41-61 (LGVA…IIYF), 81-101 (FLGF…LEMV), 114-134 (GIYL…LFMV), 144-164 (LVYG…LAGI), and 180-200 (LGIT…FSGI).

It belongs to the NqrDE/RnfAE family. In terms of assembly, composed of six subunits; NqrA, NqrB, NqrC, NqrD, NqrE and NqrF.

It is found in the cell inner membrane. The catalysed reaction is a ubiquinone + n Na(+)(in) + NADH + H(+) = a ubiquinol + n Na(+)(out) + NAD(+). NQR complex catalyzes the reduction of ubiquinone-1 to ubiquinol by two successive reactions, coupled with the transport of Na(+) ions from the cytoplasm to the periplasm. NqrA to NqrE are probably involved in the second step, the conversion of ubisemiquinone to ubiquinol. This is Na(+)-translocating NADH-quinone reductase subunit E from Psychromonas ingrahamii (strain DSM 17664 / CCUG 51855 / 37).